Here is a 351-residue protein sequence, read N- to C-terminus: Putative [LysW]-L-2-aminoadipate/[LysW]-L-glutamate phosphate reductase (351 aa).

NADP(+) contacts are provided by residues 9–12 (SGFV) and 33–35 (SRR). Cys-150 is a catalytic residue. Asn-318 is an NADP(+) binding site.

This sequence belongs to the NAGSA dehydrogenase family. Type 1 subfamily. LysY sub-subfamily.

The protein resides in the cytoplasm. It catalyses the reaction [amino-group carrier protein]-C-terminal-N-(1-carboxy-5-oxopentan-1-yl)-L-glutamine + phosphate + NADP(+) = [amino-group carrier protein]-C-terminal-N-(1-carboxy-5-phosphooxy-5-oxopentan-1-yl)-L-glutamine + NADPH + H(+). It carries out the reaction [amino-group carrier protein]-C-terminal-gamma-(L-glutamyl-5-semialdehyde)-L-glutamate + phosphate + NADP(+) = [amino-group carrier protein]-C-terminal-gamma-(5-phospho-L-glutamyl)-L-glutamate + NADPH + H(+). Its pathway is amino-acid biosynthesis; L-lysine biosynthesis via AAA pathway; L-lysine from L-alpha-aminoadipate (Thermus route): step 3/5. It functions in the pathway amino-acid biosynthesis; L-arginine biosynthesis. In terms of biological role, involved in both the arginine and lysine biosynthetic pathways. This Pyrobaculum aerophilum (strain ATCC 51768 / DSM 7523 / JCM 9630 / CIP 104966 / NBRC 100827 / IM2) protein is Putative [LysW]-L-2-aminoadipate/[LysW]-L-glutamate phosphate reductase.